Reading from the N-terminus, the 430-residue chain is Histidine--tRNA ligase (430 aa).

This sequence belongs to the class-II aminoacyl-tRNA synthetase family. As to quaternary structure, homodimer.

The protein localises to the cytoplasm. It carries out the reaction tRNA(His) + L-histidine + ATP = L-histidyl-tRNA(His) + AMP + diphosphate + H(+). The chain is Histidine--tRNA ligase from Lactococcus lactis subsp. cremoris (strain SK11).